The sequence spans 471 residues: tRNA-2-methylthio-N(6)-dimethylallyladenosine synthase (471 aa).

In terms of domain architecture, MTTase N-terminal spans 29-146 (KKFHIKTYGC…LPELIAKVNR (118 aa)). The [4Fe-4S] cluster site is built by C38, C74, C109, C187, C191, and C194. Residues 173–405 (RVPQSSAFLS…QQLLKEKQLE (233 aa)) enclose the Radical SAM core domain. Residues 408–467 (KKMIGKTVTVLFDKKHPDKISGRTEYMQQVFSDDSNLLDKIVTMRVEDASTFTLKCTAED) enclose the TRAM domain.

The protein belongs to the methylthiotransferase family. MiaB subfamily. Monomer. The cofactor is [4Fe-4S] cluster.

The protein localises to the cytoplasm. The catalysed reaction is N(6)-dimethylallyladenosine(37) in tRNA + (sulfur carrier)-SH + AH2 + 2 S-adenosyl-L-methionine = 2-methylsulfanyl-N(6)-dimethylallyladenosine(37) in tRNA + (sulfur carrier)-H + 5'-deoxyadenosine + L-methionine + A + S-adenosyl-L-homocysteine + 2 H(+). Its function is as follows. Catalyzes the methylthiolation of N6-(dimethylallyl)adenosine (i(6)A), leading to the formation of 2-methylthio-N6-(dimethylallyl)adenosine (ms(2)i(6)A) at position 37 in tRNAs that read codons beginning with uridine. The chain is tRNA-2-methylthio-N(6)-dimethylallyladenosine synthase from Neorickettsia sennetsu (strain ATCC VR-367 / Miyayama) (Ehrlichia sennetsu).